Here is a 196-residue protein sequence, read N- to C-terminus: ATP-dependent Clp protease proteolytic subunit (196 aa).

Ser101 (nucleophile) is an active-site residue. His126 is a catalytic residue.

The protein belongs to the peptidase S14 family. In terms of assembly, component of the chloroplastic Clp protease core complex.

It localises to the plastid. The protein resides in the chloroplast stroma. The catalysed reaction is Hydrolysis of proteins to small peptides in the presence of ATP and magnesium. alpha-casein is the usual test substrate. In the absence of ATP, only oligopeptides shorter than five residues are hydrolyzed (such as succinyl-Leu-Tyr-|-NHMec, and Leu-Tyr-Leu-|-Tyr-Trp, in which cleavage of the -Tyr-|-Leu- and -Tyr-|-Trp bonds also occurs).. Functionally, cleaves peptides in various proteins in a process that requires ATP hydrolysis. Has a chymotrypsin-like activity. Plays a major role in the degradation of misfolded proteins. The polypeptide is ATP-dependent Clp protease proteolytic subunit (Panax ginseng (Korean ginseng)).